The primary structure comprises 182 residues: Crossover junction endodeoxyribonuclease RuvC (182 aa).

Catalysis depends on residues D7, E69, and D141. 3 residues coordinate Mg(2+): D7, E69, and D141.

It belongs to the RuvC family. As to quaternary structure, homodimer which binds Holliday junction (HJ) DNA. The HJ becomes 2-fold symmetrical on binding to RuvC with unstacked arms; it has a different conformation from HJ DNA in complex with RuvA. In the full resolvosome a probable DNA-RuvA(4)-RuvB(12)-RuvC(2) complex forms which resolves the HJ. Requires Mg(2+) as cofactor.

The protein resides in the cytoplasm. The catalysed reaction is Endonucleolytic cleavage at a junction such as a reciprocal single-stranded crossover between two homologous DNA duplexes (Holliday junction).. The RuvA-RuvB-RuvC complex processes Holliday junction (HJ) DNA during genetic recombination and DNA repair. Endonuclease that resolves HJ intermediates. Cleaves cruciform DNA by making single-stranded nicks across the HJ at symmetrical positions within the homologous arms, yielding a 5'-phosphate and a 3'-hydroxyl group; requires a central core of homology in the junction. The consensus cleavage sequence is 5'-(A/T)TT(C/G)-3'. Cleavage occurs on the 3'-side of the TT dinucleotide at the point of strand exchange. HJ branch migration catalyzed by RuvA-RuvB allows RuvC to scan DNA until it finds its consensus sequence, where it cleaves and resolves the cruciform DNA. The polypeptide is Crossover junction endodeoxyribonuclease RuvC (Albidiferax ferrireducens (strain ATCC BAA-621 / DSM 15236 / T118) (Rhodoferax ferrireducens)).